We begin with the raw amino-acid sequence, 226 residues long: Thiamine-phosphate synthase (226 aa).

4-amino-2-methyl-5-(diphosphooxymethyl)pyrimidine contacts are provided by residues 46–50 and Asn-87; that span reads QLRDK. Residues Asp-88 and Asp-107 each coordinate Mg(2+). Ser-126 contributes to the 4-amino-2-methyl-5-(diphosphooxymethyl)pyrimidine binding site. 152–154 provides a ligand contact to 2-[(2R,5Z)-2-carboxy-4-methylthiazol-5(2H)-ylidene]ethyl phosphate; that stretch reads TPT. Lys-155 contacts 4-amino-2-methyl-5-(diphosphooxymethyl)pyrimidine. Gly-183 provides a ligand contact to 2-[(2R,5Z)-2-carboxy-4-methylthiazol-5(2H)-ylidene]ethyl phosphate.

Belongs to the thiamine-phosphate synthase family. It depends on Mg(2+) as a cofactor.

It carries out the reaction 2-[(2R,5Z)-2-carboxy-4-methylthiazol-5(2H)-ylidene]ethyl phosphate + 4-amino-2-methyl-5-(diphosphooxymethyl)pyrimidine + 2 H(+) = thiamine phosphate + CO2 + diphosphate. The enzyme catalyses 2-(2-carboxy-4-methylthiazol-5-yl)ethyl phosphate + 4-amino-2-methyl-5-(diphosphooxymethyl)pyrimidine + 2 H(+) = thiamine phosphate + CO2 + diphosphate. The catalysed reaction is 4-methyl-5-(2-phosphooxyethyl)-thiazole + 4-amino-2-methyl-5-(diphosphooxymethyl)pyrimidine + H(+) = thiamine phosphate + diphosphate. The protein operates within cofactor biosynthesis; thiamine diphosphate biosynthesis; thiamine phosphate from 4-amino-2-methyl-5-diphosphomethylpyrimidine and 4-methyl-5-(2-phosphoethyl)-thiazole: step 1/1. Its function is as follows. Condenses 4-methyl-5-(beta-hydroxyethyl)thiazole monophosphate (THZ-P) and 2-methyl-4-amino-5-hydroxymethyl pyrimidine pyrophosphate (HMP-PP) to form thiamine monophosphate (TMP). The protein is Thiamine-phosphate synthase of Mycobacterium sp. (strain JLS).